The chain runs to 842 residues: Cullin-8 (842 aa).

The interval 1 to 50 (MINESVSKREGFHESISRETSASNALGLYNKFNDERNPRYRTMIAELHEF) is required for interaction with MMS1. Over residues 755–765 (LQSSNTGGERT) the composition is skewed to polar residues. Residues 755-775 (LQSSNTGGERTSSAHHEGSNS) form a disordered region. Lys-791 is covalently cross-linked (Glycyl lysine isopeptide (Lys-Gly) (interchain with G-Cter in NEDD8)).

It belongs to the cullin family. In terms of assembly, component of multiple cullin-RING ligases (CRLs) composed of 4 subunits: the RING protein HRT1, the cullin RTT101, a linker protein MMS1, and one of many alternative substrate receptors belonging to a protein family described as DCAF (DDB1- and CUL4-associated factor). Component of a RTT101(MMS1-MMS22) complex with the substrate receptor MMS22. This complex further interacts with RTT107 and CTF4 to form RTT101-MMS1-MMS22-RTT107 and RTT101-MMS1-MMS22-CTF4 complexes respectively. Component of a RTT101(MSS1-CRT10) complex with the substrate receptor CRT10. Component of a RTT101(MSS1-ESC2) complex with the potential substrate receptor ESC2. Component of a RTT101(MSS1-ORC5) complex with the potential substrate receptor ORC5. Interacts (via C-ter) with HRT1; required for ubiquitin-ligase activity. Interacts (via N-ter) with MMS1. Post-translationally, neddylated. HRT1-binding is necessary for RUB1/NEDD8 modification of RTT101. The modification enhances ubiquitin-ligase activity.

It is found in the cytoplasm. The protein localises to the nucleus. It participates in protein modification; protein ubiquitination. Functionally, core component of multiple cullin-RING-based E3 ubiquitin-protein ligase complexes (CRLs), which mediate the ubiquitination of target proteins. As a scaffold protein may contribute to catalysis through positioning of the substrate and the ubiquitin-conjugating enzyme. The CRL associates with CDC34 as the E2 ubiquitin-conjugating enzyme. The functional specificity of the CRL depends on the type of the associated substrate receptor protein. RTT101(MMS1-MMS22) promotes fork progression through damaged DNA or natural pause sites by stabilizing replication proteins like the replication fork-pausing complex (FPC) and leading-strand polymerase at stalled replication forks. RTT101(MMS1-MMS22) ubiquitinates the acetylated histones H3K56ac-H4 at lysine residues H3K121, H3K122 and H3K125. Ubiquitination is required for efficient histone deposition during replication-coupled nucleosome assembly, probably by facilitating the transfer of H3-H4 from ASF1 to other chaperones involved in histone deposition. RTT101(MMS1-CRT10) may regulate nucleotide synthesis through transcriptional regulation of ribonucleotide reductase. RTT101(MMS1) is also involved in the non-functional rRNA decay (NRD) of 25S rRNA through the selective, ubiquitination-dependent degradation of nonfunctional ribosomal particles. Ubiquitinates the FACT (facilitates chromatin transcription) complex subunit SPT16 in an MMS1-independent manner. Involved in regulation of Ty1 transposition and protects the genome from Ty1 integration upstream of tRNA genes. This Saccharomyces cerevisiae (strain ATCC 204508 / S288c) (Baker's yeast) protein is Cullin-8 (RTT101).